The chain runs to 36 residues: Photosystem I reaction center subunit VIII (36 aa).

A helical transmembrane segment spans residues 8-28 (SFFVPLVCLVFPAIAMAFLFV).

It belongs to the PsaI family.

It localises to the plastid. The protein localises to the chloroplast thylakoid membrane. May help in the organization of the PsaL subunit. The polypeptide is Photosystem I reaction center subunit VIII (Chara vulgaris (Common stonewort)).